The chain runs to 312 residues: Porphobilinogen deaminase (312 aa).

Cysteine 241 carries the S-(dipyrrolylmethanemethyl)cysteine modification.

The protein belongs to the HMBS family. As to quaternary structure, monomer. It depends on dipyrromethane as a cofactor.

It carries out the reaction 4 porphobilinogen + H2O = hydroxymethylbilane + 4 NH4(+). It functions in the pathway porphyrin-containing compound metabolism; protoporphyrin-IX biosynthesis; coproporphyrinogen-III from 5-aminolevulinate: step 2/4. In terms of biological role, tetrapolymerization of the monopyrrole PBG into the hydroxymethylbilane pre-uroporphyrinogen in several discrete steps. This is Porphobilinogen deaminase from Trichlorobacter lovleyi (strain ATCC BAA-1151 / DSM 17278 / SZ) (Geobacter lovleyi).